The following is a 195-amino-acid chain: MKIGFLGGSFDPVHFGHLIAAQDAFEQFRLDRLILVPAAQAPLKPNDVQSSPEDRFAMLRAAVEWDQRFEVSDVELRRGGTSYTIDSARYFRKQFPRDELYWIIGGDQLPQLHLWRDVSELGQLVDFIFLERPGFPIKARVDIPGLRLHRCDGHLLAISSTELRDRVKRNLSLDYFVPHKAIVYIREKHLYRPSQ.

This sequence belongs to the NadD family.

The enzyme catalyses nicotinate beta-D-ribonucleotide + ATP + H(+) = deamido-NAD(+) + diphosphate. The protein operates within cofactor biosynthesis; NAD(+) biosynthesis; deamido-NAD(+) from nicotinate D-ribonucleotide: step 1/1. In terms of biological role, catalyzes the reversible adenylation of nicotinate mononucleotide (NaMN) to nicotinic acid adenine dinucleotide (NaAD). This Opitutus terrae (strain DSM 11246 / JCM 15787 / PB90-1) protein is Probable nicotinate-nucleotide adenylyltransferase.